The following is a 598-amino-acid chain: Aspartate--tRNA(Asp/Asn) ligase (598 aa).

Residue E170 participates in L-aspartate binding. The segment at 194–197 (QLFK) is aspartate. Residue R216 coordinates L-aspartate. ATP-binding positions include 216 to 218 (RDE) and Q225. H448 is an L-aspartate binding site. An ATP-binding site is contributed by E482. R489 contributes to the L-aspartate binding site. An ATP-binding site is contributed by 534 to 537 (GWDR). A disordered region spans residues 558 to 598 (GGGVDPLTDAPAPITPQQRKESGIDAKPREDKPKEDAKSKA). Residues 575-598 (QRKESGIDAKPREDKPKEDAKSKA) show a composition bias toward basic and acidic residues.

The protein belongs to the class-II aminoacyl-tRNA synthetase family. Type 1 subfamily. As to quaternary structure, homodimer.

It is found in the cytoplasm. It catalyses the reaction tRNA(Asx) + L-aspartate + ATP = L-aspartyl-tRNA(Asx) + AMP + diphosphate. In terms of biological role, aspartyl-tRNA synthetase with relaxed tRNA specificity since it is able to aspartylate not only its cognate tRNA(Asp) but also tRNA(Asn). Reaction proceeds in two steps: L-aspartate is first activated by ATP to form Asp-AMP and then transferred to the acceptor end of tRNA(Asp/Asn). This chain is Aspartate--tRNA(Asp/Asn) ligase, found in Mycolicibacterium smegmatis (strain ATCC 700084 / mc(2)155) (Mycobacterium smegmatis).